The following is a 250-amino-acid chain: tRNA-splicing endonuclease subunit Sen2-2 (250 aa).

Residues tyrosine 148, histidine 156, and lysine 189 contribute to the active site. A disordered region spans residues serine 225–leucine 250. Over residues serine 234–leucine 250 the composition is skewed to polar residues.

It belongs to the tRNA-intron endonuclease family. In terms of assembly, tRNA splicing endonuclease is a heterotetramer composed of SEN2, SEN15, SEN34/LENG5 and SEN54.

The protein localises to the nucleus. It carries out the reaction pretRNA = a 3'-half-tRNA molecule with a 5'-OH end + a 5'-half-tRNA molecule with a 2',3'-cyclic phosphate end + an intron with a 2',3'-cyclic phosphate and a 5'-hydroxyl terminus.. In terms of biological role, constitutes one of the two catalytic subunit of the tRNA-splicing endonuclease complex, a complex responsible for identification and cleavage of the splice sites in pre-tRNA. It cleaves pre-tRNA at the 5'- and 3'-splice sites to release the intron. The products are an intron and two tRNA half-molecules bearing 2',3'-cyclic phosphate and 5'-OH termini. There are no conserved sequences at the splice sites, but the intron is invariably located at the same site in the gene, placing the splice sites an invariant distance from the constant structural features of the tRNA body. Probably carries the active site for 5'-splice site cleavage. The chain is tRNA-splicing endonuclease subunit Sen2-2 (SEN2) from Arabidopsis thaliana (Mouse-ear cress).